Consider the following 523-residue polypeptide: (R)-citramalate synthase (523 aa).

One can recognise a Pyruvate carboxyltransferase domain in the interval 6–272 (VEVLDTTLRD…KGNESLKKLK (267 aa)).

This sequence belongs to the alpha-IPM synthase/homocitrate synthase family.

It carries out the reaction pyruvate + acetyl-CoA + H2O = (3R)-citramalate + CoA + H(+). It functions in the pathway amino-acid biosynthesis; L-isoleucine biosynthesis; 2-oxobutanoate from pyruvate: step 1/3. Its activity is regulated as follows. Inhibited by isoleucine. Its function is as follows. Catalyzes the condensation of pyruvate and acetyl-coenzyme A to form (R)-citramalate. Makes part of a pathway for isoleucine biosynthesis, i.e. the citramalate-dependent pathway. Also displays a low alpha-isopropylmalate synthase activity, using 2-oxoisovalerate as substrate, but is unable to use 2-oxoglutarate. The protein is (R)-citramalate synthase of Sulfolobus acidocaldarius (strain ATCC 33909 / DSM 639 / JCM 8929 / NBRC 15157 / NCIMB 11770).